The sequence spans 285 residues: Urease accessory protein UreD (285 aa).

The protein belongs to the UreD family. In terms of assembly, ureD, UreF and UreG form a complex that acts as a GTP-hydrolysis-dependent molecular chaperone, activating the urease apoprotein by helping to assemble the nickel containing metallocenter of UreC. The UreE protein probably delivers the nickel.

The protein localises to the cytoplasm. Functionally, required for maturation of urease via the functional incorporation of the urease nickel metallocenter. This is Urease accessory protein UreD from Picosynechococcus sp. (strain ATCC 27264 / PCC 7002 / PR-6) (Agmenellum quadruplicatum).